A 209-amino-acid polypeptide reads, in one-letter code: Inorganic pyrophosphatase (209 aa).

Substrate-binding residues include K38, R52, and Y64. 3 residues coordinate Mg(2+): D92, D97, and D130. Residue Y167 coordinates substrate.

It belongs to the PPase family. In terms of assembly, homohexamer. Requires Mg(2+) as cofactor.

The protein localises to the cytoplasm. It carries out the reaction diphosphate + H2O = 2 phosphate + H(+). Catalyzes the hydrolysis of inorganic pyrophosphate (PPi) forming two phosphate ions. This is Inorganic pyrophosphatase from Chlamydia muridarum (strain MoPn / Nigg).